We begin with the raw amino-acid sequence, 218 residues long: Cytochrome b6 (218 aa).

Residues 35-55 (IFYCLGGITLVCFLIQFATGF) form a helical membrane-spanning segment. Cys-38 lines the heme c pocket. Positions 89 and 103 each coordinate heme b. A run of 3 helical transmembrane segments spans residues 93–113 (ASMM…TGGF), 119–139 (LTWV…VTGY), and 189–209 (LHTF…FLMI). Heme b contacts are provided by His-190 and His-205.

The protein belongs to the cytochrome b family. PetB subfamily. As to quaternary structure, the 4 large subunits of the cytochrome b6-f complex are cytochrome b6, subunit IV (17 kDa polypeptide, PetD), cytochrome f and the Rieske protein, while the 4 small subunits are PetG, PetL, PetM and PetN. The complex functions as a dimer. Requires heme b as cofactor. Heme c is required as a cofactor.

It is found in the cellular thylakoid membrane. Functionally, component of the cytochrome b6-f complex, which mediates electron transfer between photosystem II (PSII) and photosystem I (PSI), cyclic electron flow around PSI, and state transitions. This Prochlorococcus marinus (strain MIT 9215) protein is Cytochrome b6.